Reading from the N-terminus, the 263-residue chain is ATP synthase subunit b 2 (263 aa).

Residues 2–22 traverse the membrane as a helical segment; that stretch reads LIDPLTVVAQIINFLILVALL.

Belongs to the ATPase B chain family. In terms of assembly, F-type ATPases have 2 components, F(1) - the catalytic core - and F(0) - the membrane proton channel. F(1) has five subunits: alpha(3), beta(3), gamma(1), delta(1), epsilon(1). F(0) has four main subunits: a(1), b(1), b'(1) and c(10-14). The alpha and beta chains form an alternating ring which encloses part of the gamma chain. F(1) is attached to F(0) by a central stalk formed by the gamma and epsilon chains, while a peripheral stalk is formed by the delta, b and b' chains.

The protein resides in the cellular thylakoid membrane. Its function is as follows. F(1)F(0) ATP synthase produces ATP from ADP in the presence of a proton or sodium gradient. F-type ATPases consist of two structural domains, F(1) containing the extramembraneous catalytic core and F(0) containing the membrane proton channel, linked together by a central stalk and a peripheral stalk. During catalysis, ATP synthesis in the catalytic domain of F(1) is coupled via a rotary mechanism of the central stalk subunits to proton translocation. Component of the F(0) channel, it forms part of the peripheral stalk, linking F(1) to F(0). The protein is ATP synthase subunit b 2 of Acaryochloris marina (strain MBIC 11017).